The primary structure comprises 395 residues: Type III polyketide synthase A (395 aa).

63–70 (KLEHLCKT) provides a ligand contact to CoA. Cys172 acts as the Nucleophile in catalysis. 224 to 225 (GD) is a substrate binding site. CoA is bound by residues Leu274, 314-317 (GGPA), and Ala317.

Belongs to the thiolase-like superfamily. Chalcone/stilbene synthases family. In terms of assembly, homodimer. Interacts with 4CLL1/ACOS5 and TKPR1. In terms of tissue distribution, expressed in flowers and flower buds (at protein level), and, at very low levels, in roots, seedlings, leaves and stems. Mostly confined to anther tapetal cells.

The protein resides in the endoplasmic reticulum. It participates in secondary metabolite biosynthesis; flavonoid biosynthesis. Plant type III polyketide synthases (PKSs) that catalyzes the condensation of malonyl-CoA units with various CoA ester starter molecules to generate a diverse array of natural products including long-chain alkyl alpha-pyrones. Accepts up to C(20) chain-length fatty acyl CoAs as starter substrates, and carries out sequential condensations with malonyl-CoA to produce triketide and tetraketide alpha-pyrones, potential sporopollenin precursors. Favorite substrates for are midchain- and v-hydroxylated fatty acyl-CoAs (e.g. 12-hydroxyoctadecanoyl-CoA and 16-hydroxyhexadecanoyl-CoA). Required for pollen development and sporopollenin biosynthesis, the major constituent of exine in the outer pollen wall. In vitro, can use 4-coumaroyl-coenzyme A as substrate to produce bis-noryangonin and fatty acyl-coenzyme A as substrate to produce medium-chain alkyl pyrones. May play a role in both the synthesis of pollen fatty acids and phenolics found in exine. This Arabidopsis thaliana (Mouse-ear cress) protein is Type III polyketide synthase A.